The primary structure comprises 633 residues: Extracellular metalloproteinase mep (633 aa).

An N-terminal signal peptide occupies residues 1-18 (MRLLSLAGAMALPLCVLA). A propeptide spanning residues 19–244 (HPTHRTRGIA…IHGVVDYISD (226 aa)) is cleaved from the precursor. A glycan (N-linked (GlcNAc...) asparagine) is linked at Asn-326. His-428 lines the Zn(2+) pocket. Residue Glu-429 is part of the active site. His-432 is a Zn(2+) binding site. An N-linked (GlcNAc...) asparagine glycan is attached at Asn-514.

The protein belongs to the peptidase M36 family. It depends on Zn(2+) as a cofactor.

The protein localises to the secreted. In terms of biological role, secreted metalloproteinase that allows assimilation of proteinaceous substrates. The sequence is that of Extracellular metalloproteinase mep (mep) from Aspergillus terreus (strain NIH 2624 / FGSC A1156).